We begin with the raw amino-acid sequence, 775 residues long: Coiled-coil domain-containing protein 33 (775 aa).

Disordered regions lie at residues 1–23 (MGRQKTKVPEEPQDRLDTSLDPY) and 68–87 (EANNHSPQARTSVTSEPTRA). The span at 7–18 (KVPEEPQDRLDT) shows a compositional bias: basic and acidic residues. Residues 12–141 (PQDRLDTSLD…RAFHPYHFEL (130 aa)) enclose the C2 domain. Residues 71 to 84 (NHSPQARTSVTSEP) are compositionally biased toward polar residues. Coiled-coil stretches lie at residues 414-561 (VEMN…ERKE) and 672-715 (DKFS…LQEQ). Residues 735–775 (RSQGSTTPRQNLKDEGYPGNIERPLQTHLTPGTRDIRHHLR) are disordered.

The protein is Coiled-coil domain-containing protein 33 (Ccdc33) of Rattus norvegicus (Rat).